We begin with the raw amino-acid sequence, 282 residues long: Large ribosomal subunit protein uL2 (282 aa).

Disordered regions lie at residues 31–56 (EKSL…RHRG) and 226–282 (SVMN…GSKM). Residues 35–44 (LDSQSHSAGR) show a composition bias toward polar residues. The span at 257 to 266 (TVGKKTRSKK) shows a compositional bias: basic residues.

Belongs to the universal ribosomal protein uL2 family. Part of the 50S ribosomal subunit. Forms a bridge to the 30S subunit in the 70S ribosome.

Its function is as follows. One of the primary rRNA binding proteins. Required for association of the 30S and 50S subunits to form the 70S ribosome, for tRNA binding and peptide bond formation. It has been suggested to have peptidyltransferase activity; this is somewhat controversial. Makes several contacts with the 16S rRNA in the 70S ribosome. The chain is Large ribosomal subunit protein uL2 from Levilactobacillus brevis (strain ATCC 367 / BCRC 12310 / CIP 105137 / JCM 1170 / LMG 11437 / NCIMB 947 / NCTC 947) (Lactobacillus brevis).